The primary structure comprises 145 residues: Large ribosomal subunit protein uL11 (145 aa).

Belongs to the universal ribosomal protein uL11 family. As to quaternary structure, part of the ribosomal stalk of the 50S ribosomal subunit. Interacts with L10 and the large rRNA to form the base of the stalk. L10 forms an elongated spine to which L12 dimers bind in a sequential fashion forming a multimeric L10(L12)X complex. In terms of processing, one or more lysine residues are methylated.

Functionally, forms part of the ribosomal stalk which helps the ribosome interact with GTP-bound translation factors. The sequence is that of Large ribosomal subunit protein uL11 from Coxiella burnetii (strain Dugway 5J108-111).